The primary structure comprises 430 residues: Adenylosuccinate synthetase (430 aa).

GTP contacts are provided by residues 13–19 (GDEGKGK) and 41–43 (GHT). Aspartate 14 serves as the catalytic Proton acceptor. Residues aspartate 14 and glycine 41 each contribute to the Mg(2+) site. Residues 14–17 (DEGK), 39–42 (NAGH), threonine 130, arginine 144, glutamine 225, threonine 240, and arginine 304 contribute to the IMP site. The active-site Proton donor is the histidine 42. Residue 300 to 306 (ATTGRAR) coordinates substrate. GTP-binding positions include arginine 306, 332-334 (KLD), and 414-416 (STG).

The protein belongs to the adenylosuccinate synthetase family. Homodimer. The cofactor is Mg(2+).

It is found in the cytoplasm. It carries out the reaction IMP + L-aspartate + GTP = N(6)-(1,2-dicarboxyethyl)-AMP + GDP + phosphate + 2 H(+). Its pathway is purine metabolism; AMP biosynthesis via de novo pathway; AMP from IMP: step 1/2. Its function is as follows. Plays an important role in the de novo pathway of purine nucleotide biosynthesis. Catalyzes the first committed step in the biosynthesis of AMP from IMP. The polypeptide is Adenylosuccinate synthetase (Pseudomonas paraeruginosa (strain DSM 24068 / PA7) (Pseudomonas aeruginosa (strain PA7))).